Consider the following 545-residue polypeptide: Thermosome subunit beta (545 aa).

Belongs to the TCP-1 chaperonin family. As to quaternary structure, forms a Heterooligomeric complex of two stacked eight-membered rings.

Molecular chaperone; binds unfolded polypeptides in vitro, and has a weak ATPase activity. The polypeptide is Thermosome subunit beta (thsB) (Archaeoglobus fulgidus (strain ATCC 49558 / DSM 4304 / JCM 9628 / NBRC 100126 / VC-16)).